The following is a 205-amino-acid chain: Guanylate kinase (205 aa).

Residues 17 to 195 (SRLLVLSGPS…AVEAVERLLF (179 aa)) enclose the Guanylate kinase-like domain. 24–31 (GPSGVGKD) lines the ATP pocket.

This sequence belongs to the guanylate kinase family.

Its subcellular location is the cytoplasm. The catalysed reaction is GMP + ATP = GDP + ADP. Essential for recycling GMP and indirectly, cGMP. In Gloeobacter violaceus (strain ATCC 29082 / PCC 7421), this protein is Guanylate kinase.